Consider the following 166-residue polypeptide: Photosystem I assembly protein Ycf3 (166 aa).

3 TPR repeats span residues 35 to 68 (AFTY…EIDP), 72 to 105 (SYIL…NPSL), and 120 to 153 (GEQA…APTN).

It belongs to the Ycf3 family.

It is found in the plastid. The protein localises to the chloroplast thylakoid membrane. Functionally, essential for the assembly of the photosystem I (PSI) complex. May act as a chaperone-like factor to guide the assembly of the PSI subunits. The polypeptide is Photosystem I assembly protein Ycf3 (Oltmannsiellopsis viridis (Marine flagellate)).